A 199-amino-acid polypeptide reads, in one-letter code: Photosystem I reaction center subunit XI (199 aa).

Helical transmembrane passes span valine 108 to leucine 128 and phenylalanine 165 to leucine 185.

This sequence belongs to the PsaL family.

Its subcellular location is the cellular thylakoid membrane. The sequence is that of Photosystem I reaction center subunit XI from Prochlorococcus marinus (strain MIT 9215).